The following is an 86-amino-acid chain: MANIKSAIKRAKTSEKRRVANSQEKAAMRTAVKRVDALVLEGNKEAAQEAFVLATKKLDKAASKGLIHKNKAGRDKSRLAARIAAL.

Positions 1-25 are disordered; it reads MANIKSAIKRAKTSEKRRVANSQEK.

Belongs to the bacterial ribosomal protein bS20 family.

Its function is as follows. Binds directly to 16S ribosomal RNA. The protein is Small ribosomal subunit protein bS20 of Exiguobacterium sp. (strain ATCC BAA-1283 / AT1b).